The following is a 243-amino-acid chain: uncharacterized protein (243 aa).

This sequence belongs to the mycobacterial PPE family.

The protein resides in the cell membrane. This is an uncharacterized protein from Mycobacterium tuberculosis (strain CDC 1551 / Oshkosh).